Here is a 249-residue protein sequence, read N- to C-terminus: 5'-nucleotidase SurE (249 aa).

Positions 8, 9, 39, and 91 each coordinate a divalent metal cation.

It belongs to the SurE nucleotidase family. It depends on a divalent metal cation as a cofactor.

It is found in the cytoplasm. The enzyme catalyses a ribonucleoside 5'-phosphate + H2O = a ribonucleoside + phosphate. In terms of biological role, nucleotidase that shows phosphatase activity on nucleoside 5'-monophosphates. The polypeptide is 5'-nucleotidase SurE (Pseudomonas syringae pv. syringae (strain B728a)).